The primary structure comprises 80 residues: Toxin Acra I-2 (80 aa).

Positions 1 to 22 (MMKLALFSIIVILFSLIGSIHG) are cleaved as a signal peptide. An LCN-type CS-alpha/beta domain is found at 25 to 80 (VPGNYPLDSSGNKYPCTVLGDNQSCIDVCKKHGVKYGYCYSFKCWCEFLEDKNVSI). Disulfide bonds link C40–C63, C49–C68, and C53–C70.

As to expression, expressed by the venom gland.

The protein localises to the secreted. Probable neurotoxin that inhibits ion channels. Is toxic to mice. Is about 2.8% of the total protein in the venom. This is Toxin Acra I-2 from Androctonus crassicauda (Arabian fat-tailed scorpion).